A 931-amino-acid polypeptide reads, in one-letter code: Isoleucine--tRNA ligase (931 aa).

Residues 57-67 (PFANGNIHMGH) carry the 'HIGH' region motif. Residue glutamate 556 participates in L-isoleucyl-5'-AMP binding. The 'KMSKS' region motif lies at 597-601 (KMSKS). Residue lysine 600 participates in ATP binding. Zn(2+) contacts are provided by cysteine 890, cysteine 893, cysteine 910, and cysteine 913.

The protein belongs to the class-I aminoacyl-tRNA synthetase family. IleS type 1 subfamily. In terms of assembly, monomer. It depends on Zn(2+) as a cofactor.

It is found in the cytoplasm. It catalyses the reaction tRNA(Ile) + L-isoleucine + ATP = L-isoleucyl-tRNA(Ile) + AMP + diphosphate. Its function is as follows. Catalyzes the attachment of isoleucine to tRNA(Ile). As IleRS can inadvertently accommodate and process structurally similar amino acids such as valine, to avoid such errors it has two additional distinct tRNA(Ile)-dependent editing activities. One activity is designated as 'pretransfer' editing and involves the hydrolysis of activated Val-AMP. The other activity is designated 'posttransfer' editing and involves deacylation of mischarged Val-tRNA(Ile). In Lactobacillus delbrueckii subsp. bulgaricus (strain ATCC 11842 / DSM 20081 / BCRC 10696 / JCM 1002 / NBRC 13953 / NCIMB 11778 / NCTC 12712 / WDCM 00102 / Lb 14), this protein is Isoleucine--tRNA ligase.